Here is a 433-residue protein sequence, read N- to C-terminus: 3-phosphoshikimate 1-carboxyvinyltransferase (433 aa).

The 3-phosphoshikimate site is built by lysine 23, serine 24, and arginine 28. Lysine 23 contributes to the phosphoenolpyruvate binding site. Positions 95 and 123 each coordinate phosphoenolpyruvate. Serine 167, glutamine 169, aspartate 317, and lysine 344 together coordinate 3-phosphoshikimate. Glutamine 169 serves as a coordination point for phosphoenolpyruvate. The active-site Proton acceptor is the aspartate 317. Positions 348 and 390 each coordinate phosphoenolpyruvate.

Belongs to the EPSP synthase family. In terms of assembly, monomer.

It localises to the cytoplasm. The catalysed reaction is 3-phosphoshikimate + phosphoenolpyruvate = 5-O-(1-carboxyvinyl)-3-phosphoshikimate + phosphate. Its pathway is metabolic intermediate biosynthesis; chorismate biosynthesis; chorismate from D-erythrose 4-phosphate and phosphoenolpyruvate: step 6/7. Its function is as follows. Catalyzes the transfer of the enolpyruvyl moiety of phosphoenolpyruvate (PEP) to the 5-hydroxyl of shikimate-3-phosphate (S3P) to produce enolpyruvyl shikimate-3-phosphate and inorganic phosphate. The sequence is that of 3-phosphoshikimate 1-carboxyvinyltransferase from Staphylococcus epidermidis (strain ATCC 35984 / DSM 28319 / BCRC 17069 / CCUG 31568 / BM 3577 / RP62A).